Reading from the N-terminus, the 390-residue chain is Bifunctional enzyme IspD/IspF (390 aa).

Residues 1–229 (MAAGRGERAG…RQDHAVFPDI (229 aa)) are 2-C-methyl-D-erythritol 4-phosphate cytidylyltransferase. The segment at 230 to 390 (RTGNGYDVHS…TVIYPGEVPE (161 aa)) is 2-C-methyl-D-erythritol 2,4-cyclodiphosphate synthase. Residues D236 and H238 each contribute to the a divalent metal cation site. 4-CDP-2-C-methyl-D-erythritol 2-phosphate is bound by residues 236 to 238 (DVH) and 262 to 263 (HS). A divalent metal cation is bound at residue H270. Residues 284–286 (DIG), 360–363 (TTNE), F367, and R370 each bind 4-CDP-2-C-methyl-D-erythritol 2-phosphate.

It in the N-terminal section; belongs to the IspD/TarI cytidylyltransferase family. IspD subfamily. This sequence in the C-terminal section; belongs to the IspF family. Requires a divalent metal cation as cofactor.

The enzyme catalyses 2-C-methyl-D-erythritol 4-phosphate + CTP + H(+) = 4-CDP-2-C-methyl-D-erythritol + diphosphate. The catalysed reaction is 4-CDP-2-C-methyl-D-erythritol 2-phosphate = 2-C-methyl-D-erythritol 2,4-cyclic diphosphate + CMP. The protein operates within isoprenoid biosynthesis; isopentenyl diphosphate biosynthesis via DXP pathway; isopentenyl diphosphate from 1-deoxy-D-xylulose 5-phosphate: step 2/6. It functions in the pathway isoprenoid biosynthesis; isopentenyl diphosphate biosynthesis via DXP pathway; isopentenyl diphosphate from 1-deoxy-D-xylulose 5-phosphate: step 4/6. Bifunctional enzyme that catalyzes the formation of 4-diphosphocytidyl-2-C-methyl-D-erythritol from CTP and 2-C-methyl-D-erythritol 4-phosphate (MEP) (IspD), and catalyzes the conversion of 4-diphosphocytidyl-2-C-methyl-D-erythritol 2-phosphate (CDP-ME2P) to 2-C-methyl-D-erythritol 2,4-cyclodiphosphate (ME-CPP) with a corresponding release of cytidine 5-monophosphate (CMP) (IspF). In Brucella abortus biovar 1 (strain 9-941), this protein is Bifunctional enzyme IspD/IspF.